Consider the following 373-residue polypeptide: Probable tRNA sulfurtransferase (373 aa).

A THUMP domain is found at 54 to 158; sequence NKNIEELSKV…NDVAYFYYKI (105 aa). ATP-binding positions include 176 to 177, 201 to 202, Lys-256, Gly-278, and Gln-287; these read LF and NF.

It belongs to the ThiI family.

It is found in the cytoplasm. The catalysed reaction is [ThiI sulfur-carrier protein]-S-sulfanyl-L-cysteine + a uridine in tRNA + 2 reduced [2Fe-2S]-[ferredoxin] + ATP + H(+) = [ThiI sulfur-carrier protein]-L-cysteine + a 4-thiouridine in tRNA + 2 oxidized [2Fe-2S]-[ferredoxin] + AMP + diphosphate. It catalyses the reaction [ThiS sulfur-carrier protein]-C-terminal Gly-Gly-AMP + S-sulfanyl-L-cysteinyl-[cysteine desulfurase] + AH2 = [ThiS sulfur-carrier protein]-C-terminal-Gly-aminoethanethioate + L-cysteinyl-[cysteine desulfurase] + A + AMP + 2 H(+). It functions in the pathway cofactor biosynthesis; thiamine diphosphate biosynthesis. In terms of biological role, catalyzes the ATP-dependent transfer of a sulfur to tRNA to produce 4-thiouridine in position 8 of tRNAs, which functions as a near-UV photosensor. Also catalyzes the transfer of sulfur to the sulfur carrier protein ThiS, forming ThiS-thiocarboxylate. This is a step in the synthesis of thiazole, in the thiamine biosynthesis pathway. The sulfur is donated as persulfide by IscS. The chain is Probable tRNA sulfurtransferase from Saccharolobus islandicus (strain Y.N.15.51 / Yellowstone #2) (Sulfolobus islandicus).